Here is a 226-residue protein sequence, read N- to C-terminus: NAD(P)H-hydrate epimerase (226 aa).

Residues 10-215 enclose the YjeF N-terminal domain; the sequence is AIELDLDLFE…ALQRKYQLNL (206 aa). (6S)-NADPHX is bound at residue 58–62; sequence NNGGD. K(+) is bound by residues Asn-59 and Asp-123. Residues 127–133 and Asp-156 contribute to the (6S)-NADPHX site; that span reads GFGFKPP. A K(+)-binding site is contributed by Ser-159.

This sequence belongs to the NnrE/AIBP family. Requires K(+) as cofactor.

It catalyses the reaction (6R)-NADHX = (6S)-NADHX. It carries out the reaction (6R)-NADPHX = (6S)-NADPHX. Its function is as follows. Catalyzes the epimerization of the S- and R-forms of NAD(P)HX, a damaged form of NAD(P)H that is a result of enzymatic or heat-dependent hydration. This is a prerequisite for the S-specific NAD(P)H-hydrate dehydratase to allow the repair of both epimers of NAD(P)HX. This is NAD(P)H-hydrate epimerase from Drosophila persimilis (Fruit fly).